Consider the following 267-residue polypeptide: tRNA-cytidine(32) 2-sulfurtransferase (267 aa).

The short motif at 37 to 42 (SGGKDS) is the PP-loop motif element. Cysteine 112, cysteine 115, and cysteine 203 together coordinate [4Fe-4S] cluster.

The protein belongs to the TtcA family. Homodimer. It depends on Mg(2+) as a cofactor. The cofactor is [4Fe-4S] cluster.

It is found in the cytoplasm. It carries out the reaction cytidine(32) in tRNA + S-sulfanyl-L-cysteinyl-[cysteine desulfurase] + AH2 + ATP = 2-thiocytidine(32) in tRNA + L-cysteinyl-[cysteine desulfurase] + A + AMP + diphosphate + H(+). It functions in the pathway tRNA modification. Its function is as follows. Catalyzes the ATP-dependent 2-thiolation of cytidine in position 32 of tRNA, to form 2-thiocytidine (s(2)C32). The sulfur atoms are provided by the cysteine/cysteine desulfurase (IscS) system. The chain is tRNA-cytidine(32) 2-sulfurtransferase from Dichelobacter nodosus (strain VCS1703A).